Here is a 170-residue protein sequence, read N- to C-terminus: Lipoprotein signal peptidase (170 aa).

The next 3 membrane-spanning stretches (helical) occupy residues 12–32, 67–87, and 94–116; these read WYWVVVLVFVADQLSKQWVLS, WQRWLFTFVAVGFSVVLSVWL, and MWRLNLAYTLVIGGALGNLIDRL. Active-site residues include D123 and D141. Residues 133 to 153 traverse the membrane as a helical segment; it reads HFPAFNIADSAICVGAALIIL.

It belongs to the peptidase A8 family.

It is found in the cell inner membrane. It carries out the reaction Release of signal peptides from bacterial membrane prolipoproteins. Hydrolyzes -Xaa-Yaa-Zaa-|-(S,diacylglyceryl)Cys-, in which Xaa is hydrophobic (preferably Leu), and Yaa (Ala or Ser) and Zaa (Gly or Ala) have small, neutral side chains.. It participates in protein modification; lipoprotein biosynthesis (signal peptide cleavage). Its function is as follows. This protein specifically catalyzes the removal of signal peptides from prolipoproteins. This is Lipoprotein signal peptidase from Shewanella halifaxensis (strain HAW-EB4).